We begin with the raw amino-acid sequence, 236 residues long: 3-deoxy-D-manno-octulosonic acid kinase (236 aa).

Asp-166 is an active-site residue.

It belongs to the protein kinase superfamily. KdkA/RfaP family.

The protein resides in the cell inner membrane. The enzyme catalyses an alpha-Kdo-(2-&gt;6)-lipid IVA + ATP = a 4-O-phospho-alpha-Kdo-(2-&gt;6)-lipid IVA + ADP + H(+). Its pathway is bacterial outer membrane biogenesis; LPS core biosynthesis. Functionally, catalyzes the ATP-dependent phosphorylation of the 3-deoxy-D-manno-octulosonic acid (Kdo) residue in Kdo-lipid IV(A) at the 4-OH position. The polypeptide is 3-deoxy-D-manno-octulosonic acid kinase (Photobacterium profundum (strain SS9)).